The following is a 1118-amino-acid chain: Carbamoyl phosphate synthase arginine-specific large chain (1118 aa).

The carboxyphosphate synthetic domain stretch occupies residues 23–420; it reads QLVEGVNSVL…AFQKALRQVD (398 aa). R150, R190, G196, G197, K227, L229, E234, G260, V261, H262, Q303, and E317 together coordinate ATP. An ATP-grasp 1 domain is found at 154-346; sequence ASALKDINIP…LAYTAAKIGL (193 aa). Positions 303, 317, and 319 each coordinate Mg(2+). Q303, E317, and N319 together coordinate Mn(2+). The segment at 421 to 573 is oligomerization domain; sequence PSLLGFQGST…YTTYNATKND (153 aa). The carbamoyl phosphate synthetic domain stretch occupies residues 574–958; that stretch reads VEFNENGMLV…SYWTAIQSTM (385 aa). The region spanning 698 to 890 is the ATP-grasp 2 domain; it reads SSILDSIDVD…FIEIAVKAFL (193 aa). R734, K773, I775, E780, G805, V806, H807, S808, Q848, and E861 together coordinate ATP. Q848, E861, and N863 together coordinate Mg(2+). Mn(2+) is bound by residues Q848, E861, and N863. The interval 959–1102 is allosteric domain; that stretch reads NFHVPLPPSG…KILESHDVIV (144 aa). An MGS-like domain is found at 960–1118; that stretch reads FHVPLPPSGI…WDEFIGFKAY (159 aa).

It belongs to the CarB family. Heterodimer composed of 2 chains; the small (or glutamine) chain promotes the hydrolysis of glutamine to ammonia, which is used by the large (or ammonia) chain to synthesize carbamoyl phosphate. The cofactor is Mg(2+). Mn(2+) serves as cofactor.

The protein localises to the cytoplasm. The enzyme catalyses hydrogencarbonate + L-glutamine + 2 ATP + H2O = carbamoyl phosphate + L-glutamate + 2 ADP + phosphate + 2 H(+). It catalyses the reaction hydrogencarbonate + NH4(+) + 2 ATP = carbamoyl phosphate + 2 ADP + phosphate + 2 H(+). Its pathway is amino-acid biosynthesis; L-arginine biosynthesis; carbamoyl phosphate from bicarbonate: step 1/1. Functionally, large subunit of the arginine-specific carbamoyl phosphate synthase (CPSase). CPSase catalyzes the formation of carbamoyl phosphate from the ammonia moiety of glutamine, hydrogencarbonate, and phosphate donated by ATP, constituting the first step of 2 biosynthetic pathways, one leading to arginine and/or urea and the other to pyrimidine nucleotides. The large subunit (synthetase) binds the substrates ammonia (free or transferred from glutamine from the small subunit), hydrogencarbonate and ATP and carries out an ATP-coupled ligase reaction, activating hydrogencarbonate by forming carboxy phosphate which reacts with ammonia to form carbamoyl phosphate. This is Carbamoyl phosphate synthase arginine-specific large chain (CPA2) from Saccharomyces cerevisiae (strain ATCC 204508 / S288c) (Baker's yeast).